The following is a 231-amino-acid chain: Demethylmenaquinone methyltransferase (231 aa).

Residues Thr-62, Asp-80, 100–101 (DA), and Ser-117 each bind S-adenosyl-L-methionine.

Belongs to the class I-like SAM-binding methyltransferase superfamily. MenG/UbiE family.

It catalyses the reaction a 2-demethylmenaquinol + S-adenosyl-L-methionine = a menaquinol + S-adenosyl-L-homocysteine + H(+). Its pathway is quinol/quinone metabolism; menaquinone biosynthesis; menaquinol from 1,4-dihydroxy-2-naphthoate: step 2/2. In terms of biological role, methyltransferase required for the conversion of demethylmenaquinol (DMKH2) to menaquinol (MKH2). This chain is Demethylmenaquinone methyltransferase, found in Mycobacterium marinum (strain ATCC BAA-535 / M).